The sequence spans 359 residues: C-X-C chemokine receptor type 4 (359 aa).

Positions 1 to 23 (MEPISVSIYTSDNYSEEVGSGDY) are important for chemokine binding and signaling. Residues 1-40 (MEPISVSIYTSDNYSEEVGSGDYDSNKEPCFRDENVHFNR) are Extracellular-facing. Position 9 is a sulfotyrosine (Y9). N13 carries N-linked (GlcNAc...) asparagine glycosylation. Residue Y14 is modified to Sulfotyrosine. S20 carries O-linked (Xyl...) (chondroitin sulfate) serine glycosylation. Residue Y23 is modified to Sulfotyrosine. Disulfide bonds link C30/C281 and C111/C193. A helical membrane pass occupies residues 41 to 65 (IFLPTIYFIIFLTGIVGNGLVILVM). Residues 66–79 (GYQKKLRSMTDKYR) are Cytoplasmic-facing. The chain crosses the membrane as a helical span at residues 80–101 (LHLSVADLLFVITLPFWAVDAM). The interval 96 to 99 (WAVD) is chemokine binding. Residues 102–112 (ADWYFGKFLCK) are Extracellular-facing. The helical transmembrane segment at 113 to 132 (AVHIIYTVNLYSSVLILAFI) threads the bilayer. The segment at 115-119 (HIIYT) is chemokine binding. Residues 133-156 (SLDRYLAIVHATNSQRPRKLLAEK) are Cytoplasmic-facing. The short motif at 135 to 137 (DRY) is the Important for signaling element. An involved in dimerization; when bound to chemokine region spans residues 137-149 (YLAIVHATNSQRP). A helical membrane pass occupies residues 157–176 (AVYVGVWIPALLLTIPDFIF). At 177-202 (ADVSQGDISQGDDRYICDRLYPDSLW) the chain is on the extracellular side. The segment at 193 to 197 (CDRLY) is chemokine binding, important for signaling. The segment at 198–217 (PDSLWMVVFQFQHIMVGLIL) is involved in dimerization. Residues 203 to 223 (MVVFQFQHIMVGLILPGIVIL) form a helical membrane-spanning segment. Residues 224 to 248 (SCYCIIISKLSHSKGHQKRKALKTT) are Cytoplasmic-facing. Residues 249–268 (VILILAFFACWLPYYVGISI) form a helical membrane-spanning segment. Residues 269–289 (DSFILLGVIKQGCDFESIVHK) lie on the Extracellular side of the membrane. The segment at 273–275 (LLG) is involved in dimerization. Residues 290-309 (WISITEALAFFHCCLNPILY) form a helical membrane-spanning segment. Residues 310 to 359 (AFLGAKFKSSAQHALNSMSRGSSLKILSKGKRGGHSSVSTESESSSFHSS) are Cytoplasmic-facing. S326 and S328 each carry phosphoserine. S331 and S332 each carry phosphoserine; by PKC and GRK6. The tract at residues 335–359 (ILSKGKRGGHSSVSTESESSSFHSS) is disordered. At S337 the chain carries Phosphoserine; by GRK6. A Glycyl lysine isopeptide (Lys-Gly) (interchain with G-Cter in ubiquitin) cross-link involves residue K338. Residues 344–359 (HSSVSTESESSSFHSS) are compositionally biased toward low complexity. S346 is modified (phosphoserine; by GRK6). A phosphoserine mark is found at S355 and S358.

It belongs to the G-protein coupled receptor 1 family. As to quaternary structure, monomer. Can form homodimers. Interacts with CD164. Interacts with ARRB2; the interaction is dependent on the C-terminal phosphorylation of CXCR4 and allows activation of MAPK1 and MAPK3. Interacts with ARR3; the interaction is dependent on the C-terminal phosphorylation of CXCR4 and modulates calcium mobilization. Interacts with RNF113A; the interaction, enhanced by CXCL12, promotes CXCR4 ubiquitination and subsequent degradation. Interacts (via the cytoplasmic C-terminal) with ITCH (via the WW domains I and II); the interaction, enhanced by CXCL12, promotes CXCR4 ubiquitination and leads to its degradation. Interacts with extracellular ubiquitin. Interacts with DBN1; this interaction is enhanced by antigenic stimulation. Following LPS binding, may form a complex with GDF5, HSP90AA1 and HSPA8. Post-translationally, phosphorylated on agonist stimulation. Rapidly phosphorylated on serine and threonine residues in the C-terminal. Phosphorylation at Ser-331 and Ser-332 leads to recruitment of ITCH, ubiquitination and protein degradation. In terms of processing, ubiquitinated after ligand binding, leading to its degradation. Ubiquitinated by ITCH at the cell membrane on agonist stimulation. The ubiquitin-dependent mechanism, endosomal sorting complex required for transport (ESCRT), then targets CXCR4 for lysosomal degradation. This process is dependent also on prior Ser-/Thr-phosphorylation in the C-terminal of CXCR4. Also binding of ARRB1 to STAM negatively regulates CXCR4 sorting to lysosomes though modulating ubiquitination of SFR5S. Sulfation is required for efficient binding of CXCL12/SDF-1alpha and promotes its dimerization. Post-translationally, O- and N-glycosylated. N-glycosylation can mask coreceptor function. The O-glycosylation chondroitin sulfate attachment does not affect interaction with CXCL12/SDF-1alpha nor its coreceptor activity. Lymphocytes, macrophages, neutrophils, microglial cells and astrocytes. Found in spleen, thymus, bone marrow, lymph nodes and, at lower levels in brain, small intestine, stomach and kidney. CXCR4-A is predominant in all tissues tested. During embryonic development, high levels are detected in the endothelium of developing blood vessels and in many regions of the developing brain including the olfactory epithelium, olfactory bulb, hippocampus, cerebellum and spinal cord.

The protein resides in the cell membrane. Its subcellular location is the cell junction. It localises to the early endosome. It is found in the late endosome. The protein localises to the lysosome. Receptor for the C-X-C chemokine CXCL12/SDF-1 that transduces a signal by increasing intracellular calcium ion levels and enhancing MAPK1/MAPK3 activation. Involved in the AKT signaling cascade. Plays a role in regulation of cell migration, e.g. during wound healing. Acts as a receptor for extracellular ubiquitin; leading to enhanced intracellular calcium ions and reduced cellular cAMP levels. Binds bacterial lipopolysaccharide (LPS) et mediates LPS-induced inflammatory response, including TNF secretion by monocytes. Involved in hematopoiesis and in cardiac ventricular septum formation. Also plays an essential role in vascularization of the gastrointestinal tract, probably by regulating vascular branching and/or remodeling processes in endothelial cells. Involved in cerebellar development. In the CNS, could mediate hippocampal-neuron survival. The chain is C-X-C chemokine receptor type 4 (Cxcr4) from Mus musculus (Mouse).